The following is a 149-amino-acid chain: Large ribosomal subunit protein uL13 (149 aa).

Belongs to the universal ribosomal protein uL13 family. Part of the 50S ribosomal subunit.

Functionally, this protein is one of the early assembly proteins of the 50S ribosomal subunit, although it is not seen to bind rRNA by itself. It is important during the early stages of 50S assembly. This Borrelia turicatae (strain 91E135) protein is Large ribosomal subunit protein uL13.